We begin with the raw amino-acid sequence, 558 residues long: uncharacterized protein (558 aa).

The next 6 membrane-spanning stretches (helical) occupy residues 63 to 83 (LTGI…PSIY), 90 to 110 (VTFG…TYWI), 143 to 163 (VAAV…TLYG), 168 to 188 (VFVT…ATNC), 226 to 246 (SLGS…VLLV), and 258 to 278 (VLIL…ILAW). The HAMP domain maps to 279 to 330 (LTAAPVRVVRAALKRVEQGDLRGDLVVFDGTELGELQRGFNAMVNGLRERER). One can recognise a Guanylate cyclase domain in the interval 362 to 486 (AVVFVDIVGS…KPVNQAARLC (125 aa)). The interval 529–558 (TQLASPHRRPPGSIHLTAEHAEEIRTDRLG) is disordered. A compositionally biased stretch (basic and acidic residues) spans 545–558 (TAEHAEEIRTDRLG).

It belongs to the adenylyl cyclase class-3 family.

It localises to the cell membrane. This is an uncharacterized protein from Mycobacterium tuberculosis (strain CDC 1551 / Oshkosh).